We begin with the raw amino-acid sequence, 158 residues long: Kelch repeat protein B10 (158 aa).

Kelch repeat units lie at residues 25–76 (TIFV…STFG) and 77–129 (MLYF…KLNN).

This sequence belongs to the poxviruses Kelch family.

The chain is Kelch repeat protein B10 from Vaccinia virus (strain Ankara) (VACV).